Here is a 469-residue protein sequence, read N- to C-terminus: MWKEKVQEYEGQIIDDLKGLLSIESVRDDSKASDETPVGPGPRQALDYMYEIAQRDGFSTHDVDHIAGRIEAGKGDDVLGVLCHVDVVPAGDGWDSDPFNPVVTDDAIIARGTLDDKGPTIAAYYAVKILNDMKVDWKKRIHIIIGTDEESDWKCTERYFQTEEMPTLGFAPDAEFPAIHGEKGITTFDLVQNSTSEDQDEPDYELISFESGQRYNMVPDHAQARVFVKENMTDVVQHFEHYLDQHKLQGESVVDSGELVLTLEGKAVHGMDPSLGVNAGLYLLDFISTLNLNQTAREFVDFSNRYLHESHFGEKMGMKFHTDVMGDVTTNVGIISYDNKQGGRFGINLRYPQKFEFEEAIQRFTKEIKAYGFDLELGKVQQPHFVDKNDPFVQKLVKAYRNQTGDMSEPYTIGGGTYARNLDKGVAFGAMFEDSEDLMHQKNEYITKKQLFNATSIYLEAIYSLCVEG.

Histidine 84 contributes to the Zn(2+) binding site. Residue aspartate 86 is part of the active site. Aspartate 115 contacts Zn(2+). Residue glutamate 149 is the Proton acceptor of the active site. Glutamate 150, aspartate 173, and histidine 440 together coordinate Zn(2+).

The protein belongs to the peptidase M20A family. It depends on Zn(2+) as a cofactor.

This Staphylococcus haemolyticus (strain JCSC1435) protein is Putative dipeptidase SH1171.